Here is a 433-residue protein sequence, read N- to C-terminus: MKNKIKFANELLDFIYKSPTAFHAVDTIKKVLNKEGFSELKECEKWNIEKGKKYYMTKNDSAIVAFVVGNGEVHEDGFKIIGAHTDSPTFRIKPNPEMTSEQSYIKLNTEVYGGPILNTWIDRPLAVAGRVTLKGENILFPETKLVNINKPIMIIPNLAIHMNRNINQGIELNRQVDTLPILGLINDKFEKNDYLLKAIAKELDVDYKEIIDFDLFLYEYEKGSIIGIENEFVSSGRLDDLEAVHAALEGLTQSNVSKATNVLVCFDNEEVGSSTKQGADSNMLANVLERIVISLNGDREDFFRALSKSFIISSDSAHAVHPNKGEKCDPTNRPKLNKGPAIKIAASQSYTSDSNSSSVFKALCSKADVPVQEFVNRSDERGGSTIGPISSTHLNIRSVDIGTPLLAMHSIRELCGVDDHYYGMKVFKEFYNL.

Residues histidine 84, histidine 161, and histidine 409 each coordinate Zn(2+).

It belongs to the peptidase M18 family. Zn(2+) serves as cofactor.

The chain is Probable M18 family aminopeptidase 2 from Clostridium novyi (strain NT).